Here is a 492-residue protein sequence, read N- to C-terminus: Octanoyltransferase (492 aa).

Residues 1–255 (MRCILLGSGT…GYDGLEAIID (255 aa)) form a unknown region. The segment at 256 to 492 (EKGIRIKDFE…AVFRRNFGAL (237 aa)) is lipB domain. In terms of domain architecture, BPL/LPL catalytic spans 305 to 492 (RKPQNTLLFC…AVFRRNFGAL (188 aa)). Substrate contacts are provided by residues 350–357 (RGGDITYH), 423–425 (AIG), and 436–438 (GFA). The active-site Acyl-thioester intermediate is the cysteine 454.

In the C-terminal section; belongs to the LipB family.

The protein resides in the cytoplasm. The catalysed reaction is octanoyl-[ACP] + L-lysyl-[protein] = N(6)-octanoyl-L-lysyl-[protein] + holo-[ACP] + H(+). It participates in protein modification; protein lipoylation via endogenous pathway; protein N(6)-(lipoyl)lysine from octanoyl-[acyl-carrier-protein]: step 1/2. Its function is as follows. Catalyzes the transfer of endogenously produced octanoic acid from octanoyl-acyl-carrier-protein onto the lipoyl domains of lipoate-dependent enzymes. Lipoyl-ACP can also act as a substrate although octanoyl-ACP is likely to be the physiological substrate. The sequence is that of Octanoyltransferase from Porphyromonas gingivalis (strain ATCC BAA-308 / W83).